A 77-amino-acid chain; its full sequence is Translation initiation factor IF-1, chloroplastic (77 aa).

One can recognise an S1-like domain in the interval 1–71 (MKEQKWIHEG…SRGRIIYRLR (71 aa)).

This sequence belongs to the IF-1 family. In terms of assembly, component of the 30S ribosomal translation pre-initiation complex which assembles on the 30S ribosome in the order IF-2 and IF-3, IF-1 and N-formylmethionyl-tRNA(fMet); mRNA recruitment can occur at any time during PIC assembly.

The protein localises to the plastid. It is found in the chloroplast. Functionally, one of the essential components for the initiation of protein synthesis. Stabilizes the binding of IF-2 and IF-3 on the 30S subunit to which N-formylmethionyl-tRNA(fMet) subsequently binds. Helps modulate mRNA selection, yielding the 30S pre-initiation complex (PIC). Upon addition of the 50S ribosomal subunit IF-1, IF-2 and IF-3 are released leaving the mature 70S translation initiation complex. In Buxus microphylla (Littleleaf boxwood), this protein is Translation initiation factor IF-1, chloroplastic.